We begin with the raw amino-acid sequence, 329 residues long: Protein Brevis radix-like 4 (329 aa).

A disordered region spans residues 12 to 37 (SGTSRHHGQQRRGGSPPPRGRTTSVY). In terms of domain architecture, BRX 1 spans 86-142 (REWVAQVEPGVQITFVSLAGGGGNDLKRIRFSREMYDKWQAQKWWGENNERIMELYN). Residues 151–263 (LPTPPRSDDG…TTSCSSRDEV (113 aa)) form a disordered region. 2 stretches are compositionally biased toward low complexity: residues 222-236 (SNPS…QQPQ) and 243-252 (AAASDAMDAA). Positions 253-263 (RTTSCSSRDEV) are enriched in polar residues. The BRX 2 domain occupies 274 to 329 (TEWVIQDEPGVYITVRELADGTRELRRVRFSRERFAELNAKLWWEENKERIQAQYL).

The protein belongs to the BRX family.

The protein localises to the nucleus. The chain is Protein Brevis radix-like 4 (BRXL4) from Oryza sativa subsp. japonica (Rice).